The following is a 312-amino-acid chain: Lipoyl synthase (312 aa).

7 residues coordinate [4Fe-4S] cluster: cysteine 51, cysteine 56, cysteine 62, cysteine 77, cysteine 81, cysteine 84, and serine 290. Positions 63 to 280 constitute a Radical SAM core domain; that stretch reads WSRKTATYLA…RTIGTSLGLF (218 aa).

The protein belongs to the radical SAM superfamily. Lipoyl synthase family. [4Fe-4S] cluster serves as cofactor.

It is found in the cytoplasm. It carries out the reaction [[Fe-S] cluster scaffold protein carrying a second [4Fe-4S](2+) cluster] + N(6)-octanoyl-L-lysyl-[protein] + 2 oxidized [2Fe-2S]-[ferredoxin] + 2 S-adenosyl-L-methionine + 4 H(+) = [[Fe-S] cluster scaffold protein] + N(6)-[(R)-dihydrolipoyl]-L-lysyl-[protein] + 4 Fe(3+) + 2 hydrogen sulfide + 2 5'-deoxyadenosine + 2 L-methionine + 2 reduced [2Fe-2S]-[ferredoxin]. It functions in the pathway protein modification; protein lipoylation via endogenous pathway; protein N(6)-(lipoyl)lysine from octanoyl-[acyl-carrier-protein]: step 2/2. Its function is as follows. Catalyzes the radical-mediated insertion of two sulfur atoms into the C-6 and C-8 positions of the octanoyl moiety bound to the lipoyl domains of lipoate-dependent enzymes, thereby converting the octanoylated domains into lipoylated derivatives. The polypeptide is Lipoyl synthase (Chlamydia caviae (strain ATCC VR-813 / DSM 19441 / 03DC25 / GPIC) (Chlamydophila caviae)).